Consider the following 715-residue polypeptide: Integrator complex subunit 13 (715 aa).

2 disordered regions span residues 572–612 (KPPE…SERI) and 626–659 (AEVI…SKGP). A Nuclear localization signal (NLS) motif is present at residues 581–591 (KRGRKREDKEE). The interval 658–703 (GPMSLLSLWSSRINTANSRKHQEFVGRLNSVNNKAELYQHLKEENG) is cleavage module binding motif (CMBM).

This sequence belongs to the Integrator subunit 13 family. As to quaternary structure, component of the Integrator complex, composed of core subunits INTS1, INTS2, INTS3, INTS4, INTS5, INTS6, INTS7, INTS8, INTS9/RC74, INTS10, INTS11/CPSF3L, INTS12, INTS13, INTS14 and INTS15. The core complex associates with protein phosphatase 2A subunits PPP2CA and PPP2R1A, to form the Integrator-PP2A (INTAC) complex. INTS13 is part of the tail subcomplex, composed of INTS10, INTS13, INTS14 and INTS15.

The protein resides in the nucleus. The protein localises to the cytoplasm. Functionally, component of the integrator complex, a multiprotein complex that terminates RNA polymerase II (Pol II) transcription in the promoter-proximal region of genes. The integrator complex provides a quality checkpoint during transcription elongation by driving premature transcription termination of transcripts that are unfavorably configured for transcriptional elongation: the complex terminates transcription by (1) catalyzing dephosphorylation of the C-terminal domain (CTD) of Pol II subunit POLR2A/RPB1 and SUPT5H/SPT5, (2) degrading the exiting nascent RNA transcript via endonuclease activity and (3) promoting the release of Pol II from bound DNA. The integrator complex is also involved in terminating the synthesis of non-coding Pol II transcripts, such as enhancer RNAs (eRNAs), small nuclear RNAs (snRNAs), telomerase RNAs and long non-coding RNAs (lncRNAs). Within the integrator complex, INTS13 is part of the integrator tail module and acts as a platform for the recruitment of transcription factors at promoters. Plays a role in gastrulation and early embryogenesis. This Xenopus laevis (African clawed frog) protein is Integrator complex subunit 13.